The primary structure comprises 347 residues: NADH-ubiquinone oxidoreductase chain 2 (347 aa).

The next 10 helical transmembrane spans lie at 13–33 (IILG…WIGF), 59–79 (YFLI…INLL), 84–104 (WAVS…ALAM), 111–131 (FHFW…LILL), 149–169 (IDPT…GWGG), 178–198 (IMAY…IYNP), 201–221 (TILN…LLII), 240–260 (IAII…LTGF), 276–296 (IALS…YTRL), and 326–346 (LSPL…MSAL).

Belongs to the complex I subunit 2 family. Core subunit of respiratory chain NADH dehydrogenase (Complex I) which is composed of 45 different subunits. Interacts with TMEM242.

It localises to the mitochondrion inner membrane. The enzyme catalyses a ubiquinone + NADH + 5 H(+)(in) = a ubiquinol + NAD(+) + 4 H(+)(out). Functionally, core subunit of the mitochondrial membrane respiratory chain NADH dehydrogenase (Complex I) that is believed to belong to the minimal assembly required for catalysis. Complex I functions in the transfer of electrons from NADH to the respiratory chain. The immediate electron acceptor for the enzyme is believed to be ubiquinone. In Chrotopterus auritus (Peters's woolly false vampire bat), this protein is NADH-ubiquinone oxidoreductase chain 2.